The primary structure comprises 280 residues: Large ribosomal subunit protein uL2 (280 aa).

Disordered stretches follow at residues 27 to 58 (STPE…GGGH) and 226 to 280 (MNPV…KHGR). Basic residues-rich tracts occupy residues 37–58 (LHGH…GGGH) and 268–280 (IVRR…KHGR).

This sequence belongs to the universal ribosomal protein uL2 family. As to quaternary structure, part of the 50S ribosomal subunit. Forms a bridge to the 30S subunit in the 70S ribosome.

Its function is as follows. One of the primary rRNA binding proteins. Required for association of the 30S and 50S subunits to form the 70S ribosome, for tRNA binding and peptide bond formation. It has been suggested to have peptidyltransferase activity; this is somewhat controversial. Makes several contacts with the 16S rRNA in the 70S ribosome. This Mycobacterium ulcerans (strain Agy99) protein is Large ribosomal subunit protein uL2.